The following is a 532-amino-acid chain: Cocaine esterase (532 aa).

At Q1 the chain carries Pyrrolidone carboxylic acid. C69 and C96 are oxidised to a cystine. The Acyl-ester intermediate role is filled by S201. N249 is a glycosylation site (N-linked (GlcNAc...) asparagine). C253 and C264 form a disulfide bridge. Active-site charge relay system residues include E318 and H430. The Prevents secretion from ER signature appears at 529–532 (HTEL).

This sequence belongs to the type-B carboxylesterase/lipase family. As to quaternary structure, monomer.

It localises to the endoplasmic reticulum lumen. It catalyses the reaction a carboxylic ester + H2O = an alcohol + a carboxylate + H(+). The catalysed reaction is cocaine + H2O = ecgonine methyl ester + benzoate + H(+). The enzyme catalyses 2-(5Z,8Z,11Z,14Z-eicosatetraenoyl)-glycerol + H2O = glycerol + (5Z,8Z,11Z,14Z)-eicosatetraenoate + H(+). It carries out the reaction prostaglandin E2 1-glyceryl ester + H2O = prostaglandin E2 + glycerol + H(+). It catalyses the reaction prostaglandin F2alpha 1-glyceryl ester + H2O = prostaglandin F2alpha + glycerol + H(+). Involved in the detoxification of xenobiotics and in the activation of ester and amide prodrugs. Converts monoacylglycerides to free fatty acids and glycerol. Hydrolyzes of 2-arachidonoylglycerol and prostaglandins. The sequence is that of Cocaine esterase (CES2) from Oryctolagus cuniculus (Rabbit).